The following is a 205-amino-acid chain: Large ribosomal subunit protein uL4 (205 aa).

The disordered stretch occupies residues 45 to 97 (RQGTSAVKNRSAVRGGGKKPWRQKGTGRARQGSIRAPQWRGGGTVFGPTPRSY). Basic residues predominate over residues 60-71 (GGKKPWRQKGTG).

Belongs to the universal ribosomal protein uL4 family. Part of the 50S ribosomal subunit.

One of the primary rRNA binding proteins, this protein initially binds near the 5'-end of the 23S rRNA. It is important during the early stages of 50S assembly. It makes multiple contacts with different domains of the 23S rRNA in the assembled 50S subunit and ribosome. In terms of biological role, forms part of the polypeptide exit tunnel. The sequence is that of Large ribosomal subunit protein uL4 from Lactobacillus gasseri (strain ATCC 33323 / DSM 20243 / BCRC 14619 / CIP 102991 / JCM 1131 / KCTC 3163 / NCIMB 11718 / NCTC 13722 / AM63).